The primary structure comprises 461 residues: Eukaryotic translation initiation factor 3 subunit M (461 aa).

A disordered region spans residues L42 to R61. The 172-residue stretch at D205–Y376 folds into the PCI domain. The tract at residues A422–E461 is disordered. The span at S431 to Q444 shows a compositional bias: basic and acidic residues. A compositionally biased stretch (low complexity) spans P445–E461.

The protein belongs to the eIF-3 subunit M family. As to quaternary structure, component of the eukaryotic translation initiation factor 3 (eIF-3) complex.

It localises to the cytoplasm. Component of the eukaryotic translation initiation factor 3 (eIF-3) complex, which is involved in protein synthesis of a specialized repertoire of mRNAs and, together with other initiation factors, stimulates binding of mRNA and methionyl-tRNAi to the 40S ribosome. The eIF-3 complex specifically targets and initiates translation of a subset of mRNAs involved in cell proliferation. This Aspergillus terreus (strain NIH 2624 / FGSC A1156) protein is Eukaryotic translation initiation factor 3 subunit M.